The chain runs to 443 residues: Phenylalanine--tRNA ligase alpha subunit (443 aa).

Residues Thr332, 375–377 (QVE), and Tyr415 each bind L-phenylalanine. Residue Glu417 participates in Mg(2+) binding. An L-phenylalanine-binding site is contributed by Phe441.

It belongs to the class-II aminoacyl-tRNA synthetase family. Phe-tRNA synthetase alpha subunit type 2 subfamily. In terms of assembly, heterotetramer; dimer of two heterodimers formed by FARSA and FARSB. Requires Mg(2+) as cofactor.

It is found in the cytoplasm. It catalyses the reaction tRNA(Phe) + L-phenylalanine + ATP = L-phenylalanyl-tRNA(Phe) + AMP + diphosphate + H(+). The chain is Phenylalanine--tRNA ligase alpha subunit (FARSA) from Gallus gallus (Chicken).